Reading from the N-terminus, the 259-residue chain is Phosphatidylglycerol--prolipoprotein diacylglyceryl transferase (259 aa).

Helical transmembrane passes span 9–29 (IIFSIGPLAISWYSLSYVIGI), 55–75 (FITYAVIGIIVGGRLGFVLLY), 92–112 (EGGMSFHGGALGGIIAAYLFC), and 117–137 (INFLSLTDIIAPVVPIGLFLG). Arg-138 lines the a 1,2-diacyl-sn-glycero-3-phospho-(1'-sn-glycerol) pocket. 3 helical membrane-spanning segments follow: residues 172–192 (QLYEAFFEGLVLFSILAYTTF), 201–221 (GLNSGIFFTFYGLFRITIEIF), and 228–248 (IGFILDSLTMGQILSVPMLLL).

The protein belongs to the Lgt family.

It localises to the cell inner membrane. It catalyses the reaction L-cysteinyl-[prolipoprotein] + a 1,2-diacyl-sn-glycero-3-phospho-(1'-sn-glycerol) = an S-1,2-diacyl-sn-glyceryl-L-cysteinyl-[prolipoprotein] + sn-glycerol 1-phosphate + H(+). It participates in protein modification; lipoprotein biosynthesis (diacylglyceryl transfer). Its function is as follows. Catalyzes the transfer of the diacylglyceryl group from phosphatidylglycerol to the sulfhydryl group of the N-terminal cysteine of a prolipoprotein, the first step in the formation of mature lipoproteins. The sequence is that of Phosphatidylglycerol--prolipoprotein diacylglyceryl transferase from Rickettsia conorii (strain ATCC VR-613 / Malish 7).